A 354-amino-acid polypeptide reads, in one-letter code: MTGANDTPYLLRAARGEILDRPPVWMMRQAGRYMKVYRDLRDKYPSFRERSENPDLAIEISLQPWRAFQPDGVIMFSDILTPLPGMGIPFDIVESKGPVIDPPIRTKEQVDNLRPLDPEESLPFIKTILQSLRQEVGNQSTVLGFVGSPWTLAAYAIEGKSSKNYAIIKSMAFSQPEILHSFLSKIADAIAIYVRYQIDCGAQVVQLFDSWAGQLSPQDYETFALPYQQQVVRQVKETHPDTPLILYISGSAGVLERMGQSGVDIVSVDWTVDMAEARQRLGRDMKVQGNIDPGVLFGSQDFIKARILDTVRKAGRGGHILNLGHGVLVGTPEDNVRCFFETAKQVDQLLAVPV.

Substrate contacts are provided by residues 28 to 32 (RQAGR), Asp78, Tyr155, Ser210, and His325.

The protein belongs to the uroporphyrinogen decarboxylase family. As to quaternary structure, homodimer.

The protein resides in the cytoplasm. The catalysed reaction is uroporphyrinogen III + 4 H(+) = coproporphyrinogen III + 4 CO2. It functions in the pathway porphyrin-containing compound metabolism; protoporphyrin-IX biosynthesis; coproporphyrinogen-III from 5-aminolevulinate: step 4/4. Its function is as follows. Catalyzes the decarboxylation of four acetate groups of uroporphyrinogen-III to yield coproporphyrinogen-III. This is Uroporphyrinogen decarboxylase from Crocosphaera subtropica (strain ATCC 51142 / BH68) (Cyanothece sp. (strain ATCC 51142)).